The primary structure comprises 380 residues: Shaggy-related protein kinase eta (380 aa).

The Protein kinase domain maps to 40–324; sequence YMAERVVGTG…ALEACAHPFF (285 aa). Residues 46–54 and Lys-69 contribute to the ATP site; that span reads VGTGSFGIV. Position 104 is a phosphothreonine (Thr-104). Ser-105 bears the Phosphoserine mark. The active-site Proton acceptor is Asp-165. A Phosphoserine modification is found at Ser-187. The residue at position 200 (Tyr-200) is a Phosphotyrosine. A phosphothreonine mark is found at Thr-220 and Thr-261. Ser-310 bears the Phosphoserine mark. The residue at position 314 (Thr-314) is a Phosphothreonine. Ser-353 bears the Phosphoserine mark.

Belongs to the protein kinase superfamily. CMGC Ser/Thr protein kinase family. GSK-3 subfamily. In terms of assembly, interacts in vitro with the C-terminal fragment of BZR1 and with BES1/BZR2, but not through the kinase domain. Interacts with BHLH150, beet curly top virus AL4/C4 and tomato golden mosaic virus AL4/AC4. Interacts with YDA. Interacts with MKK4. Interacts with KIB1 and KIB2 in a brassinosteroid (BR)-dependent manner. Interacts with BSK1, BSK6, BSK8 and BSK11. Binds to WRKY46, WRKY54 and WRKY70. Component of a complex made of POLAR, BASL, ASK7/BIN2 and ASK3/SK12. Binds to POLAR and BASL. In terms of processing, autophosphorylated mainly on threonine and serine residues. Ubiquitination and subsequent proteasomal degradation mediated by KIB1. As to expression, in the two outer cell layers of the developing seed coat and restricted to the suspensor cells in developing embryos. Mostly expressed in stomatal lineage cells with asymmetric cell division (ACD) potential. Observed in small cells of non-protruding hypocotyl cell files and of developing cotyledon epidermis.

It is found in the cytoplasm. The protein resides in the cell cortex. The protein localises to the nucleus. Its subcellular location is the cell membrane. It carries out the reaction L-seryl-[protein] + ATP = O-phospho-L-seryl-[protein] + ADP + H(+). The enzyme catalyses L-threonyl-[protein] + ATP = O-phospho-L-threonyl-[protein] + ADP + H(+). Its activity is regulated as follows. Inactivated by an unknown mechanism after binding of brassinosteroids to the brassinosteroid receptor complex. Inhibited by lithium. Inhibited by dephosphorylation at Tyr-200 by BSU1. Competitive inhibition by KIB1 that reduces substrate (e.g. BZR1) access. Repressed by bikinin. In terms of biological role, negative regulator in brassinosteroid signal transduction pathway important for plant growth. May be also involved in auxin signaling pathway. Phosphorylates and increases the degradation of BZR1 and BZR2/BES1 by the proteasome. Phosphorylates BHLH150, beet curly top virus C4 and tomato golden mosaic virus AC4 on threonine and serine residues. Upon brassinosteroid signaling, inhibits stomatal development by phosphorylating and inhibiting the MAPKK kinase YDA and the MAPK kinases MKK4 and MKK5. Phosphorylates BSK1, BSK3, BSK5, BSK6, BSK8 and BSK11 in vitro. Phoyphorylates and destabilizes WRKY46, WRKY54 and WRKY70. Mediates BASL nuclear exclusion; kinase activity is required for this function. Required first at the cortical polarity site, to restrict MAPK signaling and promote asymmetric cell division (ACD), and second in the nucleus of stomatal lineage ground cells (SLGCs) or meristemoids, to limit cell division and to promote differentiation into pavement or stomatal guard cells, respectively, likely by initiating BASL polarization. Phosphorylates BASL, YDA and SPCH in vitro and POLAR in vivo. Phosphorylates and inhibits SPCH in the nucleus of SLGC undergoing ACD, thus negatively regulating stomatal development. The sequence is that of Shaggy-related protein kinase eta from Arabidopsis thaliana (Mouse-ear cress).